A 389-amino-acid chain; its full sequence is Na(+)/H(+) antiporter NhaA (389 aa).

The next 11 membrane-spanning stretches (helical) occupy residues Ile17–Phe37, Leu59–Val79, Ser95–Phe115, Ala124–Leu144, Val154–Phe174, Ser177–Leu197, Leu213–Ile233, Phe261–Leu281, Ile292–Val312, Ile328–Leu348, and Leu363–Val383.

The protein belongs to the NhaA Na(+)/H(+) (TC 2.A.33) antiporter family.

It localises to the cell inner membrane. The enzyme catalyses Na(+)(in) + 2 H(+)(out) = Na(+)(out) + 2 H(+)(in). In terms of biological role, na(+)/H(+) antiporter that extrudes sodium in exchange for external protons. The polypeptide is Na(+)/H(+) antiporter NhaA (Shewanella oneidensis (strain ATCC 700550 / JCM 31522 / CIP 106686 / LMG 19005 / NCIMB 14063 / MR-1)).